A 404-amino-acid polypeptide reads, in one-letter code: Sorting nexin-5 (404 aa).

N-acetylalanine is present on Ala-2. The PX domain occupies Leu-25 to Leu-172. Residues Ser-40–Lys-46, Phe-99–Lys-105, and Glu-113–Met-116 each bind a 1,2-diacyl-sn-glycero-3-phospho-(1D-myo-inositol-4,5-bisphosphate). The interval Asp-169–Val-261 is interaction with DOCK1. Residues Phe-183–Ser-200 form a membrane-binding amphipathic helix region. Ser-193 carries the post-translational modification Phosphoserine. Positions Val-202–Asn-404 constitute a BAR domain. Position 275 is an N6-acetyllysine (Lys-275).

This sequence belongs to the sorting nexin family. In terms of assembly, forms heterodimers with BAR domain-containing sorting nexins SNX1 and SNX2; does not homodimerize. The heterodimers are proposed to self-assemble into helical arrays on the membrane to stabilize and expand local membrane curvature underlying endosomal tubule formation. Thought to be a component of the originally described retromer complex (also called SNX-BAR retromer) which is a pentamer containing the heterotrimeric retromer cargo-selective complex (CSC), also described as vacuolar protein sorting subcomplex (VPS), and a heterodimeric membrane-deforming subcomplex formed between SNX1 or SNX2 and SNX5 or SNX6 (also called SNX-BAR subcomplex); the respective CSC and SNX-BAR subcomplexes associate with low affinity. Interacts with SNX1, SNX2, VPS26A, VPS29, VPS35, DCTN1, DOCK1, MIB1, PIP5K1C. Interacts with HGS; increased by PIP5K1C kinase activity and by PtdIns(3P) and/or PtdIns(3,4)P2.

The protein localises to the endosome. It localises to the early endosome. The protein resides in the early endosome membrane. It is found in the cell membrane. Its subcellular location is the cytoplasmic vesicle membrane. The protein localises to the cytoplasm. It localises to the cell projection. The protein resides in the phagocytic cup. It is found in the ruffle. Functionally, involved in several stages of intracellular trafficking. Interacts with membranes containing phosphatidylinositol lipids. Acts in part as component of the retromer membrane-deforming SNX-BAR subcomplex. The SNX-BAR retromer mediates retrograde transport of cargo proteins from endosomes to the trans-Golgi network (TGN) and is involved in endosome-to-plasma membrane transport for cargo protein recycling. The SNX-BAR subcomplex functions to deform the donor membrane into a tubular profile called endosome-to-TGN transport carrier (ETC). Does not have in vitro vesicle-to-membrane remodeling activity. Involved in retrograde transport of lysosomal enzyme receptor IGF2R. May function as link between endosomal transport vesicles and dynactin. Plays a role in the internalization of EGFR after EGF stimulation. Involved in EGFR endosomal sorting and degradation; the function involves PIP5K1C and is retromer-independent. Together with PIP5K1C facilitates HGS interaction with ubiquitinated EGFR, which initiates EGFR sorting to intraluminal vesicles (ILVs) of the multivesicular body for subsequent lysosomal degradation. Involved in E-cadherin sorting and degradation; inhibits PIP5K1C-mediated E-cadherin degradation. Plays a role in macropinocytosis. In Rattus norvegicus (Rat), this protein is Sorting nexin-5 (Snx5).